Here is a 318-residue protein sequence, read N- to C-terminus: Acetyl-coenzyme A carboxylase carboxyl transferase subunit alpha (318 aa).

Residues 39–297 (RLEKRSQTAL…SEALKAMVGK (259 aa)) enclose the CoA carboxyltransferase C-terminal domain.

Belongs to the AccA family. Acetyl-CoA carboxylase is a heterohexamer composed of biotin carboxyl carrier protein (AccB), biotin carboxylase (AccC) and two subunits each of ACCase subunit alpha (AccA) and ACCase subunit beta (AccD).

It is found in the cytoplasm. The enzyme catalyses N(6)-carboxybiotinyl-L-lysyl-[protein] + acetyl-CoA = N(6)-biotinyl-L-lysyl-[protein] + malonyl-CoA. The protein operates within lipid metabolism; malonyl-CoA biosynthesis; malonyl-CoA from acetyl-CoA: step 1/1. Component of the acetyl coenzyme A carboxylase (ACC) complex. First, biotin carboxylase catalyzes the carboxylation of biotin on its carrier protein (BCCP) and then the CO(2) group is transferred by the carboxyltransferase to acetyl-CoA to form malonyl-CoA. This chain is Acetyl-coenzyme A carboxylase carboxyl transferase subunit alpha, found in Bartonella tribocorum (strain CIP 105476 / IBS 506).